Reading from the N-terminus, the 257-residue chain is UPF0246 protein Shewana3_3143 (257 aa).

This sequence belongs to the UPF0246 family.

This is UPF0246 protein Shewana3_3143 from Shewanella sp. (strain ANA-3).